The sequence spans 775 residues: Chitin synthase 6 (775 aa).

The next 6 helical transmembrane spans lie at 19–39 (VLLM…YCLV), 54–74 (CIIV…IMVV), 94–114 (LQWF…LFCI), 441–461 (FMQN…LAIM), 470–490 (LPVG…LYFG), and 498–518 (IWLY…YMVY). Residues 532–541 (RADAAAADSH) show a composition bias toward low complexity. Disordered stretches follow at residues 532-603 (RADA…DGKF) and 702-775 (PSAF…KTSR). A compositionally biased stretch (basic and acidic residues) spans 542 to 556 (TTAREAAEQAEKQGD). The segment covering 577–586 (NRESTTTSEL) has biased composition (polar residues). Low complexity predominate over residues 702–713 (PSAFPHAHSASA). Asparagine 724 is a glycosylation site (N-linked (GlcNAc...) asparagine). Over residues 732–741 (RSEDIQRFSE) the composition is skewed to basic and acidic residues. Residues 754–763 (SRNVGNSSFA) show a composition bias toward polar residues. Asparagine 759 carries an N-linked (GlcNAc...) asparagine glycan. The span at 766-775 (MAKRTPKTSR) shows a compositional bias: basic residues.

It belongs to the chitin synthase family. Class VII subfamily.

It is found in the cell membrane. The catalysed reaction is [(1-&gt;4)-N-acetyl-beta-D-glucosaminyl](n) + UDP-N-acetyl-alpha-D-glucosamine = [(1-&gt;4)-N-acetyl-beta-D-glucosaminyl](n+1) + UDP + H(+). Its function is as follows. Polymerizes chitin, a structural polymer of the cell wall and septum, by transferring the sugar moiety of UDP-GlcNAc to the non-reducing end of the growing chitin polymer. Shows additive effects in septum formation with CHS1, CHS2, CHS3A, CHS4, CHS5 and CHS7. Involved in virulence and mediates mycotoxin deoxinivalenol (DON) biosynthesis via the regulation of the expression of TRI4, TRI5 and TRI6. This is Chitin synthase 6 from Gibberella zeae (strain ATCC MYA-4620 / CBS 123657 / FGSC 9075 / NRRL 31084 / PH-1) (Wheat head blight fungus).